A 140-amino-acid chain; its full sequence is Small ribosomal subunit protein eS17x (140 aa).

This sequence belongs to the eukaryotic ribosomal protein eS17 family.

This chain is Small ribosomal subunit protein eS17x (RPS17C), found in Arabidopsis thaliana (Mouse-ear cress).